Reading from the N-terminus, the 544-residue chain is Putative ligase Rv1013 (544 aa).

An Isoglutamyl lysine isopeptide (Lys-Gln) (interchain with Q-Cter in protein Pup) cross-link involves residue lysine 528.

Belongs to the ATP-dependent AMP-binding enzyme family. Pupylated at Lys-528 by the prokaryotic ubiquitin-like protein Pup, which probably leads to its degradation by the proteasome.

In Mycobacterium tuberculosis (strain ATCC 25618 / H37Rv), this protein is Putative ligase Rv1013 (pks16).